Consider the following 105-residue polypeptide: Met repressor (105 aa).

It belongs to the MetJ family. Homodimer.

It localises to the cytoplasm. This regulatory protein, when combined with SAM (S-adenosylmethionine) represses the expression of the methionine regulon and of enzymes involved in SAM synthesis. The polypeptide is Met repressor (Sodalis glossinidius (strain morsitans)).